The following is a 157-amino-acid chain: MQKIGIYPGTFDPVTNGHIDIIHRSSELFEKLIVAVAHSSAKNPMFSLKERLEMIQLATKSFKNVECIAFEGLLANLAKEYHCRVLVRGLRVVSDFEYELQMGYANKSLNHELETLYFMPTLQNAFISSSIVRSIIAHKGDASHLVPKEIYPFISKV.

Threonine 10 is a substrate binding site. Residues 10–11 and histidine 18 contribute to the ATP site; that span reads TF. Lysine 42, leucine 74, and arginine 88 together coordinate substrate. ATP contacts are provided by residues 89-91, glutamate 99, and 124-130; these read GLR and NAFISSS.

It belongs to the bacterial CoaD family. Homohexamer. It depends on Mg(2+) as a cofactor.

The protein resides in the cytoplasm. The catalysed reaction is (R)-4'-phosphopantetheine + ATP + H(+) = 3'-dephospho-CoA + diphosphate. It functions in the pathway cofactor biosynthesis; coenzyme A biosynthesis; CoA from (R)-pantothenate: step 4/5. Functionally, reversibly transfers an adenylyl group from ATP to 4'-phosphopantetheine, yielding dephospho-CoA (dPCoA) and pyrophosphate. This Helicobacter acinonychis (strain Sheeba) protein is Phosphopantetheine adenylyltransferase.